The sequence spans 852 residues: Envelope glycoprotein gp160 (852 aa).

A signal peptide spans 1–31 (MRARETRKNYQCLWRWGTMLLGMLMICSAAE). Residues 32-680 (NLWVTVYYGV…ITNWLWYIRI (649 aa)) are Extracellular-facing. C53 and C73 are disulfide-bonded. Residues N87, N129, N136, N141, N142, N155, N159, N189, and N198 are each glycosylated (N-linked (GlcNAc...) asparagine; by host). Cystine bridges form between C118/C206, C125/C197, C130/C156, C219/C248, and C229/C240. Positions 130 to 155 (CTDYLGNATNTNNSSGGTVEKEEIKN) are V1. The V2 stretch occupies residues 156 to 197 (CSFNITTGIRDKVQKAYAYFYKLDVVPIDDDNTNTSYRLIHC). Residues N242, N263, N277, N290, and N296 are each glycosylated (N-linked (GlcNAc...) asparagine; by host). A V3 region spans residues 297–330 (CTRPNNNRRRRITSGPGKVLYTTGEIIGDIRKAY). C297 and C331 form a disulfide bridge. N-linked (GlcNAc...) asparagine; by host glycans are attached at residues N332, N339, and N355. The CD4-binding loop stretch occupies residues 363 to 373 (SSGGDPEIVMH). Cystine bridges form between C377-C439 and C384-C412. The tract at residues 384–412 (CNTTKLFNSTWNENSTWNATGNDTITLPC) is V4. N-linked (GlcNAc...) asparagine; by host glycosylation is found at N385, N391, N397, N401, N405, N442, and N457. V5 regions lie at residues 455–466 (DKNSTTEIFRPA) and 457–466 (NSTTEIFRPA). A fusion peptide region spans residues 507–528 (AVGVIGAMFLGFLGAAGSTMGA). Positions 570–588 (KQLQARVLAVERYLRDQQL) are immunosuppression. Residues C594 and C600 are joined by a disulfide bond. N607, N612, N621, and N633 each carry an N-linked (GlcNAc...) asparagine; by host glycan. A coiled-coil region spans residues 629–663 (REIDNYTSLIYTLLEESQNQQEKNEQELLELDKWA). The segment at 658–679 (ELDKWASLWNWFSITNWLWYIR) is MPER; binding to GalCer. The chain crosses the membrane as a helical span at residues 681 to 701 (FIMIVGGLIGLRIIFAVLSIV). Residues 702-852 (NRVRQGYSPL…IRQGFERALL (151 aa)) lie on the Cytoplasmic side of the membrane. A YXXL motif; contains endocytosis signal motif is present at residues 708–711 (YSPL). Residues 717-739 (IPAQRGPDRPEGIEEGGGERDRD) are disordered. Positions 722-739 (GPDRPEGIEEGGGERDRD) are enriched in basic and acidic residues. C760 is lipidated: S-palmitoyl cysteine; by host. The short motif at 851-852 (LL) is the Di-leucine internalization motif element.

This sequence belongs to the HIV-1 env protein family. In terms of assembly, the mature envelope protein (Env) consists of a homotrimer of non-covalently associated gp120-gp41 heterodimers. The resulting complex protrudes from the virus surface as a spike. There seems to be as few as 10 spikes on the average virion. Interacts with host CD4, CCR5 and CXCR4. Gp120 also interacts with the C-type lectins CD209/DC-SIGN and CLEC4M/DC-SIGNR (collectively referred to as DC-SIGN(R)). Gp120 and gp41 interact with GalCer. Gp120 interacts with host ITGA4/ITGB7 complex; on CD4+ T-cells, this interaction results in rapid activation of integrin ITGAL/LFA-1, which facilitates efficient cell-to-cell spreading of HIV-1. Gp120 interacts with cell-associated heparan sulfate; this interaction increases virus infectivity on permissive cells and may be involved in infection of CD4- cells. The mature envelope protein (Env) consists of a homotrimer of non-covalently associated gp120-gp41 heterodimers. The resulting complex protrudes from the virus surface as a spike. There seems to be as few as 10 spikes on the average virion. In terms of processing, highly glycosylated by host. The high number of glycan on the protein is reffered to as 'glycan shield' because it contributes to hide protein sequence from adaptive immune system. Palmitoylation of the transmembrane protein and of Env polyprotein (prior to its proteolytic cleavage) is essential for their association with host cell membrane lipid rafts. Palmitoylation is therefore required for envelope trafficking to classical lipid rafts, but not for viral replication. Post-translationally, specific enzymatic cleavages in vivo yield mature proteins. Envelope glycoproteins are synthesized as an inactive precursor that is heavily N-glycosylated and processed likely by host cell furin in the Golgi to yield the mature SU and TM proteins. The cleavage site between SU and TM requires the minimal sequence [KR]-X-[KR]-R. About 2 of the 9 disulfide bonds of gp41 are reduced by P4HB/PDI, following binding to CD4 receptor.

It localises to the virion membrane. It is found in the host cell membrane. Its subcellular location is the host endosome membrane. In terms of biological role, oligomerizes in the host endoplasmic reticulum into predominantly trimers. In a second time, gp160 transits in the host Golgi, where glycosylation is completed. The precursor is then proteolytically cleaved in the trans-Golgi and thereby activated by cellular furin or furin-like proteases to produce gp120 and gp41. Functionally, attaches the virus to the host lymphoid cell by binding to the primary receptor CD4. This interaction induces a structural rearrangement creating a high affinity binding site for a chemokine coreceptor like CXCR4 and/or CCR5. Acts as a ligand for CD209/DC-SIGN and CLEC4M/DC-SIGNR, which are respectively found on dendritic cells (DCs), and on endothelial cells of liver sinusoids and lymph node sinuses. These interactions allow capture of viral particles at mucosal surfaces by these cells and subsequent transmission to permissive cells. HIV subverts the migration properties of dendritic cells to gain access to CD4+ T-cells in lymph nodes. Virus transmission to permissive T-cells occurs either in trans (without DCs infection, through viral capture and transmission), or in cis (following DCs productive infection, through the usual CD4-gp120 interaction), thereby inducing a robust infection. In trans infection, bound virions remain infectious over days and it is proposed that they are not degraded, but protected in non-lysosomal acidic organelles within the DCs close to the cell membrane thus contributing to the viral infectious potential during DCs' migration from the periphery to the lymphoid tissues. On arrival at lymphoid tissues, intact virions recycle back to DCs' cell surface allowing virus transmission to CD4+ T-cells. Its function is as follows. Acts as a class I viral fusion protein. Under the current model, the protein has at least 3 conformational states: pre-fusion native state, pre-hairpin intermediate state, and post-fusion hairpin state. During fusion of viral and target intracellular membranes, the coiled coil regions (heptad repeats) assume a trimer-of-hairpins structure, positioning the fusion peptide in close proximity to the C-terminal region of the ectodomain. The formation of this structure appears to drive apposition and subsequent fusion of viral and target cell membranes. Complete fusion occurs in host cell endosomes and is dynamin-dependent, however some lipid transfer might occur at the plasma membrane. The virus undergoes clathrin-dependent internalization long before endosomal fusion, thus minimizing the surface exposure of conserved viral epitopes during fusion and reducing the efficacy of inhibitors targeting these epitopes. Membranes fusion leads to delivery of the nucleocapsid into the cytoplasm. In Human immunodeficiency virus type 1 group M subtype B (isolate SF33) (HIV-1), this protein is Envelope glycoprotein gp160.